Here is a 480-residue protein sequence, read N- to C-terminus: ATP synthase subunit beta (480 aa).

158 to 165 (GGAGVGKT) serves as a coordination point for ATP.

It belongs to the ATPase alpha/beta chains family. F-type ATPases have 2 components, CF(1) - the catalytic core - and CF(0) - the membrane proton channel. CF(1) has five subunits: alpha(3), beta(3), gamma(1), delta(1), epsilon(1). CF(0) has three main subunits: a(1), b(2) and c(9-12). The alpha and beta chains form an alternating ring which encloses part of the gamma chain. CF(1) is attached to CF(0) by a central stalk formed by the gamma and epsilon chains, while a peripheral stalk is formed by the delta and b chains.

The protein resides in the cell inner membrane. The catalysed reaction is ATP + H2O + 4 H(+)(in) = ADP + phosphate + 5 H(+)(out). Produces ATP from ADP in the presence of a proton gradient across the membrane. The catalytic sites are hosted primarily by the beta subunits. This is ATP synthase subunit beta from Koribacter versatilis (strain Ellin345).